Reading from the N-terminus, the 283-residue chain is Diaminopimelate epimerase (283 aa).

The substrate site is built by Asn-13, Gln-46, and Asn-66. Catalysis depends on Cys-75, which acts as the Proton donor. Residues 76 to 77 (GN), Asn-166, Asn-199, and 217 to 218 (ER) each bind substrate. Cys-226 (proton acceptor) is an active-site residue. Residue 227 to 228 (GT) coordinates substrate.

The protein belongs to the diaminopimelate epimerase family. In terms of assembly, homodimer.

Its subcellular location is the cytoplasm. The enzyme catalyses (2S,6S)-2,6-diaminopimelate = meso-2,6-diaminopimelate. It participates in amino-acid biosynthesis; L-lysine biosynthesis via DAP pathway; DL-2,6-diaminopimelate from LL-2,6-diaminopimelate: step 1/1. Its function is as follows. Catalyzes the stereoinversion of LL-2,6-diaminopimelate (L,L-DAP) to meso-diaminopimelate (meso-DAP), a precursor of L-lysine and an essential component of the bacterial peptidoglycan. The chain is Diaminopimelate epimerase from Herminiimonas arsenicoxydans.